A 532-amino-acid chain; its full sequence is Bifunctional purine biosynthesis protein PurH (532 aa).

The MGS-like domain occupies 1-148; that stretch reads MQTPKPIKRA…KNHKDVTIVV (148 aa).

This sequence belongs to the PurH family.

The enzyme catalyses (6R)-10-formyltetrahydrofolate + 5-amino-1-(5-phospho-beta-D-ribosyl)imidazole-4-carboxamide = 5-formamido-1-(5-phospho-D-ribosyl)imidazole-4-carboxamide + (6S)-5,6,7,8-tetrahydrofolate. It catalyses the reaction IMP + H2O = 5-formamido-1-(5-phospho-D-ribosyl)imidazole-4-carboxamide. Its pathway is purine metabolism; IMP biosynthesis via de novo pathway; 5-formamido-1-(5-phospho-D-ribosyl)imidazole-4-carboxamide from 5-amino-1-(5-phospho-D-ribosyl)imidazole-4-carboxamide (10-formyl THF route): step 1/1. The protein operates within purine metabolism; IMP biosynthesis via de novo pathway; IMP from 5-formamido-1-(5-phospho-D-ribosyl)imidazole-4-carboxamide: step 1/1. The protein is Bifunctional purine biosynthesis protein PurH of Alteromonas mediterranea (strain DSM 17117 / CIP 110805 / LMG 28347 / Deep ecotype).